A 523-amino-acid polypeptide reads, in one-letter code: NADH-ubiquinone oxidoreductase chain 2 (523 aa).

Transmembrane regions (helical) follow at residues 3–23 (LFGVLTMILAIALFSLRIPAI), 30–50 (IILLLFSALLSYNSLYMNNIG), 62–82 (VTTITQSIDVFIYLLGALVLL), 110–130 (SVLAEYPLIALFSVLGMSSLI), 135–155 (LISMFLSIELQSFAVYILATI), 170–190 (FLLGSLSSALILLGSSLLYSF), 212–232 (IEISVLLIMVGLLFKVSAAPF), 246–266 (VVTTWLTTMPKIAFLVFILEF), 281–301 (LLLISSLLSLLIGTIGGLAQY), 306–326 (LLTYSTISHVGFLLLALAINN), 333–353 (FLFYLIQYSLTNINVFFILVA), 386–406 (GLSLAICLFSMAGIPPLVGFF), 419–439 (GNFFLAFVAILVSVVSAAYYL), and 490–510 (LVIATITLLLIFFIINPTPLL).

This sequence belongs to the complex I subunit 2 family.

The protein resides in the mitochondrion inner membrane. It carries out the reaction a ubiquinone + NADH + 5 H(+)(in) = a ubiquinol + NAD(+) + 4 H(+)(out). Core subunit of the mitochondrial membrane respiratory chain NADH dehydrogenase (Complex I) that is believed to belong to the minimal assembly required for catalysis. Complex I functions in the transfer of electrons from NADH to the respiratory chain. The immediate electron acceptor for the enzyme is believed to be ubiquinone. In Rhizopus oryzae (Mucormycosis agent), this protein is NADH-ubiquinone oxidoreductase chain 2.